We begin with the raw amino-acid sequence, 656 residues long: Phosphatidylinositol 4,5-bisphosphate-binding protein SLM2 (656 aa).

Residues 445–555 (FEVKSGFLEK…WFGNIKALSS (111 aa)) form the PH domain. The disordered stretch occupies residues 577-605 (AKSNENTTESVTPQVTNEQHTRYDDVSSS). Residues 580–594 (NENTTESVTPQVTNE) show a composition bias toward polar residues. Phosphoserine is present on S626. The short motif at 640–645 (PEFYIE) is the PXIXIT-like, required for interaction with CNA1 and CNA2, and calcineurin-dependent dephosphorylation element. Phosphoserine occurs at positions 649 and 653.

In terms of assembly, heterodimer of SLM1-SLM2. Binds phosphatidylinositol 4,5-bisphosphate, which is required for function. Interacts with the TORC2 subunits AVO2, BIT61 and TOR2. Interacts with the calcineurin catalytic subunits CNA1 and CNA2.

The protein resides in the cell membrane. In terms of biological role, together with SLM1, effector of the TORC2- and calcineurin-signaling pathways. Phosphorylated and activated by TORC2 under favorable growth conditions. Mediates actin polarization via inhibition of calcineurin-dependent transcription. Upon nutrient limitation or environmental stress, gets dephosphorylated by calcineurin, inhibiting interaction with TORC2, thereby antagonizing TORC2 signaling and mediating calcineurin-dependent actin depolarization. Also functions in heat-induced, calcineurin-mediated uracil permease (FUR4) endocytosis. The sequence is that of Phosphatidylinositol 4,5-bisphosphate-binding protein SLM2 (SLM2) from Saccharomyces cerevisiae (strain ATCC 204508 / S288c) (Baker's yeast).